Reading from the N-terminus, the 1744-residue chain is MRLLWGLIWASSFFTLSLQKPRLLLFSPSVVHLGVPLSVGVQLQDVPRGQVVKGSVFLRNPSRNNVPCSPKVDFTLSSERDFALLSLQVPLKDAKSCGLHQLLRGPEVQLVAHSPWLKDSLSRTTNIQGINLLFSSRRGHLFLQTDQPIYNPGQRVRYRVFALDQKMRPSTDTITVMVENSHGLRVRKKEVYMPSSIFQDDFVIPDISEPGTWKISARFSDGLESNSSTQFEVKKYVLPNFEVKITPGKPYILTVPGHLDEMQLDIQARYIYGKPVQGVAYVRFGLLDEDGKKTFFRGLESQTKLVNGQSHISLSKAEFQDALEKLNMGITDLQGLRLYVAAAIIESPGGEMEEAELTSWYFVSSPFSLDLSKTKRHLVPGAPFLLQALVREMSGSPASGIPVKVSATVSSPGSVPEVQDIQQNTDGSGQVSIPIIIPQTISELQLSVSAGSPHPAIARLTVAAPPSGGPGFLSIERPDSRPPRVGDTLNLNLRAVGSGATFSHYYYMILSRGQIVFMNREPKRTLTSVSVFVDHHLAPSFYFVAFYYHGDHPVANSLRVDVQAGACEGKLELSVDGAKQYRNGESVKLHLETDSLALVALGALDTALYAAGSKSHKPLNMGKVFEAMNSYDLGCGPGGGDSALQVFQAAGLAFSDGDQWTLSRKRLSCPKEKTTRKKRNVNFQKAINEKLGQYASPTAKRCCQDGVTRLPMMRSCEQRAARVQQPDCREPFLSCCQFAESLRKKSRDKGQAGLQRALEILQEEDLIDEDDIPVRSFFPENWLWRVETVDRFQILTLWLPDSLTTWEIHGLSLSKTKGLCVATPVQLRVFREFHLHLRLPMSVRRFEQLELRPVLYNYLDKNLTVSVHVSPVEGLCLAGGGGLAQQVLVPAGSARPVAFSVVPTAAAAVSLKVVARGSFEFPVGDAVSKVLQIEKEGAIHREELVYELNPLDHRGRTLEIPGNSDPNMIPDGDFNSYVRVTASDPLDTLGSEGALSPGGVASLLRLPRGCGEQTMIYLAPTLAASRYLDKTEQWSTLPPETKDHAVDLIQKGYMRIQQFRKADGSYAAWLSRDSSTWLTAFVLKVLSLAQEQVGGSPEKLQETSNWLLSQQQADGSFQDPCPVLDRSMQGGLVGNDETVALTAFVTIALHHGLAVFQDEGAEPLKQRVEASISKANSFLGEKASAGLLGAHAAAITAYALTLTKAPVDLLGVAHNNLMAMAQETGDNLYWGSVTGSQSNAVSPTPAPRNPSDPMPQAPALWIETTAYALLHLLLHEGKAEMADQASAWLTRQGSFQGGFRSTQDTVIALDALSAYWIASHTTEERGLNVTLSSTGRNGFKSHALQLNNRQIRGLEEELQFSLGSKINVKVGGNSKGTLKVLRTYNVLDMKNTTCQDLQIEVTVKGHVEYTMEANEDYEDYEYDELPAKDDPDAPLQPVTPLQLFEGRRNRRRREAPKVVEEQESRVHYTVCIWRNGKVGLSGMAIADVTLLSGFHALRADLEKLTSLSDRYVSHFETEGPHVLLYFDSVPTSRECVGFEAVQEVPVGLVQPASATLYDYYNPERRCSVFYGAPSKSRLLATLCSAEVCQCAEGKCPRQRRALERGLQDEDGYRMKFACYYPRVEYGFQVKVLREDSRAAFRLFETKITQVLHFTKDVKAAANQMRNFLVRASCRLRLEPGKEYLIMGLDGATYDLEGHPQYLLDSNSWIEEMPSERLCRSTRQRAACAQLNDFLQEYGTQGCQV.

The N-terminal stretch at 1–19 (MRLLWGLIWASSFFTLSLQ) is a signal peptide. A disulfide bridge connects residues cysteine 68 and cysteine 97. Asparagine 226 carries N-linked (GlcNAc...) asparagine glycosylation. Cysteine 635 and cysteine 669 are disulfide-bonded. Positions 676–679 (RKKR) are excised as a propeptide. Disulfide bonds link cysteine 702/cysteine 728, cysteine 703/cysteine 735, and cysteine 716/cysteine 736. The region spanning 702–736 (CCQDGVTRLPMMRSCEQRAARVQQPDCREPFLSCC) is the Anaphylatoxin-like domain. Asparagine 862 carries N-linked (GlcNAc...) asparagine glycosylation. Phosphoserine; by FAM20C is present on serine 918. The segment at residues 1010 to 1013 (CGEQ) is a cross-link (isoglutamyl cysteine thioester (Cys-Gln)). Threonine 1244 carries O-linked (GalNAc...) threonine glycosylation. The N-linked (GlcNAc...) (complex) asparagine glycan is linked to asparagine 1328. N-linked (GlcNAc...) asparagine glycosylation is present at asparagine 1391. A sulfotyrosine mark is found at tyrosine 1417, tyrosine 1420, and tyrosine 1422. A propeptide spanning residues 1447–1453 (RRNRRRR) is cleaved from the precursor. Disulfide bonds link cysteine 1471-cysteine 1535, cysteine 1583-cysteine 1588, cysteine 1595-cysteine 1673, cysteine 1618-cysteine 1742, and cysteine 1718-cysteine 1727. The region spanning 1595 to 1742 (CPRQRRALER…FLQEYGTQGC (148 aa)) is the NTR domain.

As to quaternary structure, complement circulates in blood as a disulfide-linked trimer of an alpha, beta and gamma chain. Complement C4b is composed of complement C4b-A, complement C4 beta and complement C4 gamma chains that are associated via disulfide bonds. Non-enzymatic component of the C3 convertase, also named C4bC2b, composed of the serine protease complement C2b (C2), as well as complement C4b. Non-enzymatic component of the C5 convertase, also named C4bC2bC3b, composed of the serine protease complement C2b (C2), complement C3b, as well as complement C4b. In terms of processing, prior to secretion, the single-chain precursor is enzymatically cleaved by plasminogen (PLG) to yield non-identical chains alpha, beta and gamma. During activation of the complement systems, the alpha chain is cleaved into C4a and C4b by different proteases depending on the complement pathway: C4b stays linked to the beta and gamma chains, while C4a is released in the plasma. The alpha chain is cleaved by C1S to generate C4a and C4b following activation by the classical complement system. The alpha chain is cleaved to generate C4a and C4b by MASP2 following activation by the lectin complement system. The alpha chain is cleaved by GZMK to generate C4a and C4b following activation by the GZMK complement system. Further degradation of C4b by C1 into the inactive fragments C4c and C4d blocks the generation of C3 convertase. The proteolytic cleavages often are incomplete so that many structural forms can be found in plasma. Post-translationally, upon activation, the internal thioester bond reacts with carbohydrate antigens on the target surface to form amide or ester bonds, leading to covalent association with the surface of pathogens. Ser-1236 of complement C4b interacts with complement C3b via a thioester linkage. In terms of processing, N- and O-glycosylated. O-glycosylated with a core 1 or possibly core 8 glycan. In terms of tissue distribution, complement component C4 is expressed at highest levels in the liver, at moderate levels in the adrenal cortex, adrenal medulla, thyroid gland, and the kidney, and at lowest levels in the heart, ovary, small intestine, thymus, pancreas and spleen. The extra-hepatic sites of expression may be important for the local protection and inflammatory response.

Its subcellular location is the secreted. The protein resides in the synapse. The protein localises to the cell projection. It is found in the axon. It localises to the dendrite. Its subcellular location is the cell surface. With respect to regulation, specifically inhibited by nanobody hC4Nb8, inhibiting the classical complement pathway. Specifically inhibited by NbB5, NbE11 and NbH9 nanobodies, and to a lesser extent by NbH11 and NbE3 nanobodies. In terms of biological role, precursor of non-enzymatic components of the classical, lectin and GZMK complement pathways, which consist in a cascade of proteins that leads to phagocytosis and breakdown of pathogens and signaling that strengthens the adaptive immune system. Non-enzymatic component of C3 and C5 convertases. Generated following cleavage by complement proteases (C1S, MASP2 or GZMK, depending on the complement pathway), it covalently attaches to the surface of pathogens, where it acts as an opsonin that marks the surface of antigens for removal. It then recruits the serine protease complement C2b to form the C3 and C5 convertases, which cleave and activate C3 and C5, respectively, the next components of the complement pathways. Complement C4b-A isotype is responsible for effective binding to form amide bonds with immune aggregates or protein antigens, while complement C4b-B isotype catalyzes the transacylation of the thioester carbonyl group to form ester bonds with carbohydrate antigens. Functionally, putative humoral mediator released following cleavage by complement proteases (C1S, MASP2 or GZMK, depending on the complement pathway). While it is strongly similar to anaphylatoxins, its role is unclear. Was reported to act as a mediator of local inflammatory process; however these effects were probably due to contamination with C3a and/C5a anaphylatoxins in biological assays. The protein is Complement C4-A of Homo sapiens (Human).